The primary structure comprises 473 residues: UDP-N-acetylmuramate--L-alanine ligase (473 aa).

112–118 serves as a coordination point for ATP; that stretch reads GTHGKTT.

The protein belongs to the MurCDEF family.

The protein resides in the cytoplasm. It carries out the reaction UDP-N-acetyl-alpha-D-muramate + L-alanine + ATP = UDP-N-acetyl-alpha-D-muramoyl-L-alanine + ADP + phosphate + H(+). It participates in cell wall biogenesis; peptidoglycan biosynthesis. Its function is as follows. Cell wall formation. This Nitrosomonas europaea (strain ATCC 19718 / CIP 103999 / KCTC 2705 / NBRC 14298) protein is UDP-N-acetylmuramate--L-alanine ligase.